The chain runs to 150 residues: Large ribosomal subunit protein uL15 (150 aa).

Positions Met1–His58 are disordered.

Belongs to the universal ribosomal protein uL15 family. In terms of assembly, part of the 50S ribosomal subunit.

Functionally, binds to the 23S rRNA. In Solibacter usitatus (strain Ellin6076), this protein is Large ribosomal subunit protein uL15.